A 555-amino-acid chain; its full sequence is MLLFLSVPQPRPPGARTRAGAARVARWRRLRLQQLRRLRGLLRVLRGRPGAGSRRRGRMALCGQAAGAASLPSELIVHIFSFLPAPDRLRASASCSHWRECLFYPALWPQLRICLRVSPAEQPRLEFLMRKCGWFVRELRVEFAAENYLSGGGPGDGGGADTGTGGEEVEALQLSARWLEVLRTYLELVLCVLVSIRNNRNLQKFSLFGDISVLQQQGSLSNTYLSKVDPDGKKIKQIQQLFEEILSNSRQLKWLSCGFMLEIVTPTSLSSLSNAVANTMEHLSLLDNNIPGNSTLITAVELERFVNLHSLALDFCDFTAEMARVLTDSNHVPLQRLSLLVHNVSVMHKSLDNMPNDEHWKALSRKSTSFRVYIMAFDIKSEDMLKILKPSIPLERIHFDSYITCVSGAIVDLISRQYDKFLTHFILMNDVIDTSGFPDLSDNRNEDPLVLLAWRCTKLSLLAIHGYTVWAHNLIAIARLRGSDLKVLEVTEESIDFDQGELADQDVDPVHNLIEQVSLGLGQPWHAVMDIESLSVFTEPNRHFYREMQSFSEDI.

The F-box domain maps to 65–111; that stretch reads AAGAASLPSELIVHIFSFLPAPDRLRASASCSHWRECLFYPALWPQL.

Part of the SCF (SKP1-CUL1-F-box) E3 ubiquitin-protein ligase complex SCF(FBXO33) formed of CUL1, SKP1, RBX1 and FBXO33. Interacts via its N-terminus with YBX1 CSD domain. Directly interacts with SKP1 and CUL1.

It functions in the pathway protein modification; protein ubiquitination. In terms of biological role, substrate recognition component of a SCF (SKP1-CUL1-F-box protein) E3 ubiquitin-protein ligase complex which mediates the ubiquitination and subsequent proteasomal degradation of target proteins. Probably recognizes and binds to phosphorylated target proteins. Recognizes YBX1. In Homo sapiens (Human), this protein is F-box only protein 33 (FBXO33).